Here is a 111-residue protein sequence, read N- to C-terminus: Phosphoribosyl-ATP pyrophosphatase (111 aa).

Belongs to the PRA-PH family.

The protein resides in the cytoplasm. It catalyses the reaction 1-(5-phospho-beta-D-ribosyl)-ATP + H2O = 1-(5-phospho-beta-D-ribosyl)-5'-AMP + diphosphate + H(+). It functions in the pathway amino-acid biosynthesis; L-histidine biosynthesis; L-histidine from 5-phospho-alpha-D-ribose 1-diphosphate: step 2/9. This Pseudomonas aeruginosa (strain ATCC 15692 / DSM 22644 / CIP 104116 / JCM 14847 / LMG 12228 / 1C / PRS 101 / PAO1) protein is Phosphoribosyl-ATP pyrophosphatase (hisE).